Consider the following 287-residue polypeptide: Survival motor neuron protein (287 aa).

The interval 1 to 27 (MGGGGGLPEPEDSVLFRRGTGQSDDSD) is disordered. Residues 8–39 (PEPEDSVLFRRGTGQSDDSDIWDDTALIKAYD) are P1 (binding site for GEMIN2). Thr20 carries the phosphothreonine modification. A phosphoserine mark is found at Ser23 and Ser26. A Glycyl lysine isopeptide (Lys-Gly) (interchain with G-Cter in SUMO2) cross-link involves residue Lys46. A disordered region spans residues 52 to 83 (GDISEASDKPKSTPKRKPAKKNKSQKKNATTA). Positions 63–77 (STPKRKPAKKNKSQK) are enriched in basic residues. The residue at position 64 (Thr64) is a Phosphothreonine. One can recognise a Tudor domain in the interval 86-146 (QWKVGDKCSA…LSPACEVANN (61 aa)). A required for interaction with RPP20/POP7 region spans residues 92-205 (KCSAVWSEDG…MSGSGLGPGK (114 aa)). The disordered stretch occupies residues 148–216 (EQDTQENENE…GVKFSGPPPP (69 aa)). A compositionally biased stretch (polar residues) spans 157–180 (ESQISTDESENSSRSPGNKPNNIK). Residue Lys205 forms a Glycyl lysine isopeptide (Lys-Gly) (interchain with G-Cter in SUMO2) linkage. The interval 234 to 261 (PPIIPPPPPICPDSLDDADALGSMLISW) is P2 (binding site for SM B). The interval 273–287 (GFKQNQKEGRCSHFN) is required for interaction with SYNCRIP.

This sequence belongs to the SMN family. Homooligomer; may form higher order homooligomers in the dimer to octamer range. Part of the core SMN complex that contains SMN1, GEMIN2/SIP1, DDX20/GEMIN3, GEMIN4, GEMIN5, GEMIN6, GEMIN7, GEMIN8 and STRAP/UNRIP. Part of the SMN-Sm complex that contains SMN1, GEMIN2/SIP1, DDX20/GEMIN3, GEMIN4, GEMIN5, GEMIN6, GEMIN7, GEMIN8, STRAP/UNRIP and the Sm proteins SNRPB, SNRPD1, SNRPD2, SNRPD3, SNRPE, SNRPF and SNRPG. Component of an import snRNP complex composed of KPNB1, RNUT1, SMN1 and ZNF259. Interacts with DDX20, FBL, NOLA1, RNUT1, SYNCRIP and with several spliceosomal snRNP core Sm proteins, including SNRPB, SNRPD1, SNRPD2, SNRPD3, SNRPE and ILF3. Interacts with GEMIN2; the interaction is direct. Interacts with GEMIN3; the interaction is direct. Interacts with GEMIN8; the interaction is direct. Interacts with SNRPB; the interaction is direct. Interacts (via Tudor domain) with SNRPD1 (via C-terminus); the interaction is direct. Interacts with SNRPD2; the interaction is direct. Interacts (via Tudor domain) with SNRPD3 (via C-terminus); the interaction is direct. Interacts with SNRPE; the interaction is direct. Interacts with OSTF1, LSM10, LSM11 and RPP20/POP7. Interacts (via C-terminal region) with ZPR1 (via C-terminal region). Interacts (via Tudor domain) with COIL. Interacts with SETX; recruits SETX to POLR2A. Interacts with POLR2A (via the C-terminal domain (CTD)). Interacts with PRMT5. Interacts with XRN2. Interacts (via C-terminus) with FMR1 (via C-terminus); the interaction is direct and occurs in a RNA-independent manner. Interacts (via Tudor domain) with SF3B2 ('Arg-508'-methylated form). Interacts with WRAP53/TCAB1. Interacts (via Tudor domain) with ELAVL4 in an RNA-independent manner; the interaction is required for localization of ELAVL4 to RNA granules. Interacts with FRG1.

It localises to the nucleus. The protein localises to the gem. The protein resides in the cajal body. Its subcellular location is the cytoplasm. It is found in the cytoplasmic granule. It localises to the perikaryon. The protein localises to the cell projection. The protein resides in the neuron projection. Its subcellular location is the axon. It is found in the myofibril. It localises to the sarcomere. The protein localises to the z line. Its function is as follows. The SMN complex catalyzes the assembly of small nuclear ribonucleoproteins (snRNPs), the building blocks of the spliceosome, and thereby plays an important role in the splicing of cellular pre-mRNAs. Most spliceosomal snRNPs contain a common set of Sm proteins SNRPB, SNRPD1, SNRPD2, SNRPD3, SNRPE, SNRPF and SNRPG that assemble in a heptameric protein ring on the Sm site of the small nuclear RNA to form the core snRNP (Sm core). In the cytosol, the Sm proteins SNRPD1, SNRPD2, SNRPE, SNRPF and SNRPG are trapped in an inactive 6S pICln-Sm complex by the chaperone CLNS1A that controls the assembly of the core snRNP. To assemble core snRNPs, the SMN complex accepts the trapped 5Sm proteins from CLNS1A forming an intermediate. Binding of snRNA inside 5Sm ultimately triggers eviction of the SMN complex, thereby allowing binding of SNRPD3 and SNRPB to complete assembly of the core snRNP. Within the SMN complex, SMN1 acts as a structural backbone and together with GEMIN2 it gathers the Sm complex subunits. Ensures the correct splicing of U12 intron-containing genes that may be important for normal motor and proprioceptive neurons development. Also required for resolving RNA-DNA hybrids created by RNA polymerase II, that form R-loop in transcription terminal regions, an important step in proper transcription termination. May also play a role in the metabolism of small nucleolar ribonucleoprotein (snoRNPs). The chain is Survival motor neuron protein (SMN1) from Canis lupus familiaris (Dog).